A 217-amino-acid chain; its full sequence is MARKGILGTKLGMTQVFDENNKVVPVTVVKAGPNVVTRIRTTERDGYSAVQLAYGEISPRKVIKPVAGQFAAAGVNPRRHVAELRLDDEAAVAEYEVGQELTAEIFSDGAYVDVTGTSKGKGFAGTMKRHGFRGQGAAHGAQAVHRRPGSIGGCATPGRVFKGTRMSGRMGNDRVTTQNLKVHKVDAENGVLLIKGAIPGRNGGLVVVRSAIKRGEK.

This sequence belongs to the universal ribosomal protein uL3 family. As to quaternary structure, part of the 50S ribosomal subunit. Forms a cluster with proteins L14 and L19.

Its function is as follows. One of the primary rRNA binding proteins, it binds directly near the 3'-end of the 23S rRNA, where it nucleates assembly of the 50S subunit. The sequence is that of Large ribosomal subunit protein uL3 from Mycolicibacterium smegmatis (strain ATCC 700084 / mc(2)155) (Mycobacterium smegmatis).